The primary structure comprises 107 residues: uncharacterized protein (107 aa).

The next 2 helical transmembrane spans lie at 14-34 (YLAE…IVAW) and 68-88 (FFVF…LVPI).

It is found in the cell membrane. This is an uncharacterized protein from Haemophilus influenzae (strain ATCC 51907 / DSM 11121 / KW20 / Rd).